A 236-amino-acid polypeptide reads, in one-letter code: Uridylate kinase (236 aa).

An ATP-binding site is contributed by 11 to 14; it reads KFSG. Residue Gly53 coordinates UMP. 2 residues coordinate ATP: Gly54 and Arg58. UMP-binding positions include Asp73 and 134-141; that span reads TGSPFFTT. ATP contacts are provided by Thr161, Tyr167, and Asp170.

Belongs to the UMP kinase family. In terms of assembly, homohexamer.

The protein resides in the cytoplasm. The catalysed reaction is UMP + ATP = UDP + ADP. It functions in the pathway pyrimidine metabolism; CTP biosynthesis via de novo pathway; UDP from UMP (UMPK route): step 1/1. Its activity is regulated as follows. Inhibited by UTP. Catalyzes the reversible phosphorylation of UMP to UDP. This Hydrogenovibrio crunogenus (strain DSM 25203 / XCL-2) (Thiomicrospira crunogena) protein is Uridylate kinase.